The chain runs to 55 residues: Trypsin inhibitor (55 aa).

Residues 1–55 enclose the Kazal-like domain; that stretch reads AHMDCTEFNPLCRCNKMLGDLICAVIGDAKEEHRNMCALCCEHPGGFEYSNGPCE. Intrachain disulfides connect C5-C40, C12-C41, C14-C37, and C23-C54.

It is found in the secreted. In terms of biological role, potent inhibitor of trypsin. The chain is Trypsin inhibitor from Halocynthia roretzi (Sea squirt).